A 185-amino-acid polypeptide reads, in one-letter code: Elongation factor P (185 aa).

The protein belongs to the elongation factor P family.

It is found in the cytoplasm. It participates in protein biosynthesis; polypeptide chain elongation. Its function is as follows. Involved in peptide bond synthesis. Stimulates efficient translation and peptide-bond synthesis on native or reconstituted 70S ribosomes in vitro. Probably functions indirectly by altering the affinity of the ribosome for aminoacyl-tRNA, thus increasing their reactivity as acceptors for peptidyl transferase. The sequence is that of Elongation factor P from Fervidobacterium nodosum (strain ATCC 35602 / DSM 5306 / Rt17-B1).